The following is a 350-amino-acid chain: Probable lactoylglutathione lyase, chloroplastic (350 aa).

The transit peptide at 1–61 directs the protein to the chloroplast; the sequence is MVRIIPMAAS…KLLRRSVNCL (61 aa). 2 VOC domains span residues 88 to 212 and 218 to 342; these read RMLH…LLER and PLCQ…FVDN. H91 lines the Zn(2+) pocket. Substrate is bound at residue R95. E142 is a Zn(2+) binding site. Substrate is bound by residues N146 and H160. Zn(2+)-binding residues include H160 and E208. E208 (proton donor/acceptor) is an active-site residue.

This sequence belongs to the glyoxalase I family. Requires Zn(2+) as cofactor.

It localises to the plastid. The protein localises to the chloroplast stroma. It catalyses the reaction (R)-S-lactoylglutathione = methylglyoxal + glutathione. Its pathway is secondary metabolite metabolism; methylglyoxal degradation; (R)-lactate from methylglyoxal: step 1/2. Functionally, catalyzes the conversion of hemimercaptal, formed from methylglyoxal and glutathione, to S-lactoylglutathione. This Arabidopsis thaliana (Mouse-ear cress) protein is Probable lactoylglutathione lyase, chloroplastic.